We begin with the raw amino-acid sequence, 185 residues long: Ribosome-recycling factor (185 aa).

This sequence belongs to the RRF family.

It is found in the cytoplasm. In terms of biological role, responsible for the release of ribosomes from messenger RNA at the termination of protein biosynthesis. May increase the efficiency of translation by recycling ribosomes from one round of translation to another. In Beutenbergia cavernae (strain ATCC BAA-8 / DSM 12333 / CCUG 43141 / JCM 11478 / NBRC 16432 / NCIMB 13614 / HKI 0122), this protein is Ribosome-recycling factor.